We begin with the raw amino-acid sequence, 147 residues long: uncharacterized protein (147 aa).

This sequence belongs to the limonene-1,2-epoxide hydrolase family.

This is an uncharacterized protein from Bacillus subtilis (strain 168).